The chain runs to 232 residues: Probable anion ABC transporter permease protein HVO_1887 (232 aa).

Residues Thr-16–Gly-217 form the ABC transmembrane type-1 domain. The next 5 helical transmembrane spans lie at Ser-23–Phe-43, Val-55–Leu-75, Met-93–Val-113, Ile-146–Ile-166, and Thr-198–Ala-218.

It belongs to the binding-protein-dependent transport system permease family. The complex is composed of two ATP-binding proteins (HVO_1886), two transmembrane proteins (HVO_1887) and a solute-binding protein (HVO_1888).

It is found in the cell membrane. Functionally, part of an ABC transporter complex involved in anions import. Responsible for the translocation of the substrate across the membrane. The sequence is that of Probable anion ABC transporter permease protein HVO_1887 from Haloferax volcanii (strain ATCC 29605 / DSM 3757 / JCM 8879 / NBRC 14742 / NCIMB 2012 / VKM B-1768 / DS2) (Halobacterium volcanii).